A 2383-amino-acid chain; its full sequence is Reducing polyketide synthase rdc5 (2383 aa).

The region spanning 10–438 (RAPIAIIGMS…GTNAHLVLER (429 aa)) is the Ketosynthase family 3 (KS3) domain. Residues C186, H321, and H361 each act as for beta-ketoacyl synthase activity in the active site. The interval 550 to 881 (FVFTGQGAQW…GFAAELFRRG (332 aa)) is malonyl-CoA:ACP transacylase (MAT) domain. The N-terminal hotdog fold stretch occupies residues 930–1066 (KSLIGAERPS…GLFSINYEDS (137 aa)). Positions 930 to 1253 (KSLIGAERPS…LAELEVEDAD (324 aa)) constitute a PKS/mFAS DH domain. A dehydratase (DH) domain region spans residues 932 to 1250 (LIGAERPSLD…DFHLAELEVE (319 aa)). H962 serves as the catalytic Proton acceptor; for dehydratase activity. Residues 1094 to 1253 (VEVISKQAFY…LAELEVEDAD (160 aa)) are C-terminal hotdog fold. D1160 (proton donor; for dehydratase activity) is an active-site residue. Residues 1663 to 1977 (GLLNTLHFVS…QGKHVGKMIL (315 aa)) are enoyl reductase (ER) domain. The Phosphocysteine intermediate role is filled by C1776. A ketoreductase (KR) domain region spans residues 2002-2182 (ATYLFIGGLG…VSVNLGIMRD (181 aa)). Positions 2300–2377 (AAGPIITKAL…QFAVQIAKKS (78 aa)) constitute a Carrier domain. S2337 is subject to O-(pantetheine 4'-phosphoryl)serine.

Its pathway is secondary metabolite biosynthesis. Reducing polyketide synthase; part of the gene cluster that mediates the biosynthesis of radicicol, a resorcylic acid lactone (RAL) that irreversibly inhibits the HSP90 molecular chaperone, an important target for cancer chemotherapy. The radicicol cluster encodes only two apparent post-PKS enzymes, a cytochrome P450 monooxygenase (rdc4) and a non-heme halogenase (rdc2) that could introduce the epoxide and the chlorine, respectively. If this cluster includes all the genes required for radicicol biosynthesis, the remaining structural features of radicicol are presumably generated by the PKSs rdc1 and rdc5. The C-2' ketone could arise if the R-PKS rdc5 and NR-PKS rdc1 each carry out four iterations, in contrast to the five iteration-three iteration split for the hypothemycin PKSs. The origin of the cis 5',6' double bond is not known. The radicicol R-PKS rdc5 ER domain may catalyze either double bond isomerization or reduction in the third iteration. The sequence is that of Reducing polyketide synthase rdc5 from Metacordyceps chlamydosporia (Nematophagous fungus).